The chain runs to 119 residues: Large ribosomal subunit protein uL22 (119 aa).

This sequence belongs to the universal ribosomal protein uL22 family. In terms of assembly, part of the 50S ribosomal subunit.

In terms of biological role, this protein binds specifically to 23S rRNA; its binding is stimulated by other ribosomal proteins, e.g. L4, L17, and L20. It is important during the early stages of 50S assembly. It makes multiple contacts with different domains of the 23S rRNA in the assembled 50S subunit and ribosome. Functionally, the globular domain of the protein is located near the polypeptide exit tunnel on the outside of the subunit, while an extended beta-hairpin is found that lines the wall of the exit tunnel in the center of the 70S ribosome. The protein is Large ribosomal subunit protein uL22 of Chlorobium phaeovibrioides (strain DSM 265 / 1930) (Prosthecochloris vibrioformis (strain DSM 265)).